The sequence spans 240 residues: Cysteine-rich venom protein (240 aa).

Positions 1–19 (MIAFIVLPILAAVLHQSSG) are cleaved as a signal peptide. Residues 39–166 (DLHNSLRRSV…KYRYFYVCQY (128 aa)) form the SCP domain. Intrachain disulfides connect Cys75–Cys153, Cys92–Cys167, Cys148–Cys164, Cys186–Cys193, Cys189–Cys198, Cys202–Cys235, Cys211–Cys229, and Cys220–Cys233. A ShKT domain is found at 202–235 (CTQENTYSNCNSLVQQSSCQDNNMKTKCPASCFC).

It belongs to the CRISP family. As to expression, expressed by the venom gland.

It is found in the secreted. In terms of biological role, may block ryanodine receptors (RYR). The protein is Cysteine-rich venom protein of Protobothrops mucrosquamatus (Taiwan habu).